The chain runs to 596 residues: Elongation factor 4 (596 aa).

The tr-type G domain maps to 2–184; sequence KHIRNFSIIA…VIVEQIPPPE (183 aa). GTP is bound by residues 14-19 and 131-134; these read DHGKST and NKID.

Belongs to the TRAFAC class translation factor GTPase superfamily. Classic translation factor GTPase family. LepA subfamily.

It is found in the cell inner membrane. The catalysed reaction is GTP + H2O = GDP + phosphate + H(+). Functionally, required for accurate and efficient protein synthesis under certain stress conditions. May act as a fidelity factor of the translation reaction, by catalyzing a one-codon backward translocation of tRNAs on improperly translocated ribosomes. Back-translocation proceeds from a post-translocation (POST) complex to a pre-translocation (PRE) complex, thus giving elongation factor G a second chance to translocate the tRNAs correctly. Binds to ribosomes in a GTP-dependent manner. The protein is Elongation factor 4 of Shewanella oneidensis (strain ATCC 700550 / JCM 31522 / CIP 106686 / LMG 19005 / NCIMB 14063 / MR-1).